The chain runs to 474 residues: Bifunctional ribulose 5-phosphate reductase/CDP-ribitol pyrophosphorylase Bcs1 (474 aa).

A ribitol-5-phosphate cytidylyltransferase region spans residues 1–238 (MNKNKNIGII…DKLFQSRSHF (238 aa)). The interval 250-474 (YDMKDQVLVV…ITNILADLYK (225 aa)) is ribulose-5-phosphate reductase.

This sequence in the N-terminal section; belongs to the IspD/TarI cytidylyltransferase family. It in the C-terminal section; belongs to the short-chain dehydrogenases/reductases (SDR) family. In terms of assembly, monomer.

It catalyses the reaction D-ribitol 5-phosphate + CTP + H(+) = CDP-L-ribitol + diphosphate. The catalysed reaction is D-ribitol 5-phosphate + NADP(+) = D-ribulose 5-phosphate + NADPH + H(+). It participates in capsule biogenesis; capsule polysaccharide biosynthesis. Functionally, catalyzes the NADPH-dependent reduction of D-ribulose 5-phosphate to D-ribitol 5-phosphate and the further reaction of D-ribitol 5-phosphate with CTP to form CDP-ribitol. This Haemophilus influenzae protein is Bifunctional ribulose 5-phosphate reductase/CDP-ribitol pyrophosphorylase Bcs1.